A 143-amino-acid chain; its full sequence is MKLNIIAVGALTKEYKTLYEIYNKKVSFFSTINLIEIKEVTEPNIELKIKKETKLILEKIPKNSKVFYMSLTGKKMKSEEFASLLCEDNLTFIIGGSNGVEEKYFDNKICFSDLTFPHQLFRVILIEQIYRGFAINNNIKYHK.

Residues G95 and 111-116 (FSDLTF) contribute to the S-adenosyl-L-methionine site.

It belongs to the RNA methyltransferase RlmH family. Homodimer.

The protein resides in the cytoplasm. It carries out the reaction pseudouridine(1915) in 23S rRNA + S-adenosyl-L-methionine = N(3)-methylpseudouridine(1915) in 23S rRNA + S-adenosyl-L-homocysteine + H(+). In terms of biological role, specifically methylates the pseudouridine at position 1915 (m3Psi1915) in 23S rRNA. In Metamycoplasma arthritidis (strain 158L3-1) (Mycoplasma arthritidis), this protein is Ribosomal RNA large subunit methyltransferase H.